The primary structure comprises 1492 residues: DNA polymerase alpha catalytic subunit (1492 aa).

Disordered regions lie at residues 34–112 (DFIV…VEQS), 162–195 (SVTL…DVNP), and 210–234 (ANSY…EMAN). Over residues 42-55 (YGYRDHGGEIWDRD) the composition is skewed to basic and acidic residues. Over residues 93-105 (NAASTNPSAQQKP) the composition is skewed to polar residues. Positions 166-178 (ESREEQERRRQSE) are enriched in basic and acidic residues. Composition is skewed to polar residues over residues 184–194 (ANIGQNQSDVN) and 210–224 (ANSY…SVSK). Residues cysteine 1314, cysteine 1317, cysteine 1341, cysteine 1344, cysteine 1375, cysteine 1380, cysteine 1393, and cysteine 1398 each coordinate Zn(2+). A CysA-type zinc finger spans residues 1314-1344 (CPHCAHNYHFPGILVPSSNNTELTGLACVKC). The short motif at 1375–1398 (CKEPQCGMKTNQLLLNNKCIVKGC) is the CysB motif element.

This sequence belongs to the DNA polymerase type-B family.

It is found in the nucleus. It catalyses the reaction DNA(n) + a 2'-deoxyribonucleoside 5'-triphosphate = DNA(n+1) + diphosphate. Its function is as follows. Polymerase alpha in a complex with DNA primase is a replicative polymerase. The sequence is that of DNA polymerase alpha catalytic subunit from Sterkiella nova (Ciliate).